A 234-amino-acid polypeptide reads, in one-letter code: Probable chemoreceptor glutamine deamidase CheD (234 aa).

This sequence belongs to the CheD family.

It carries out the reaction L-glutaminyl-[protein] + H2O = L-glutamyl-[protein] + NH4(+). Probably deamidates glutamine residues to glutamate on methyl-accepting chemotaxis receptors (MCPs), playing an important role in chemotaxis. The chain is Probable chemoreceptor glutamine deamidase CheD from Burkholderia pseudomallei (strain 1710b).